We begin with the raw amino-acid sequence, 348 residues long: Mannonate dehydratase (348 aa).

Belongs to the mannonate dehydratase family. It depends on Fe(2+) as a cofactor. The cofactor is Mn(2+).

It carries out the reaction D-mannonate = 2-dehydro-3-deoxy-D-gluconate + H2O. The protein operates within carbohydrate metabolism; pentose and glucuronate interconversion. In terms of biological role, catalyzes the dehydration of D-mannonate. The polypeptide is Mannonate dehydratase (Streptococcus agalactiae serotype V (strain ATCC BAA-611 / 2603 V/R)).